The primary structure comprises 102 residues: Small ribosomal subunit protein uS10 (102 aa).

This sequence belongs to the universal ribosomal protein uS10 family. In terms of assembly, part of the 30S ribosomal subunit.

Functionally, involved in the binding of tRNA to the ribosomes. In Lactobacillus gasseri (strain ATCC 33323 / DSM 20243 / BCRC 14619 / CIP 102991 / JCM 1131 / KCTC 3163 / NCIMB 11718 / NCTC 13722 / AM63), this protein is Small ribosomal subunit protein uS10.